We begin with the raw amino-acid sequence, 130 residues long: 3-aminoacrylate deaminase RutC (130 aa).

The protein belongs to the RutC family.

It catalyses the reaction (Z)-3-aminoacrylate + H2O + H(+) = 3-oxopropanoate + NH4(+). Functionally, involved in pyrimidine catabolism. Catalyzes the deamination of 3-aminoacrylate to malonic semialdehyde, a reaction that can also occur spontaneously. RutC may facilitate the reaction and modulate the metabolic fitness, rather than catalyzing essential functions. This Klebsiella pneumoniae (strain 342) protein is 3-aminoacrylate deaminase RutC.